The primary structure comprises 282 residues: Stress response regulator protein 1 (282 aa).

2 stretches are compositionally biased toward low complexity: residues 12-30 (NLSR…HSST) and 45-58 (NSQS…SNNN). 3 disordered regions span residues 12–31 (NLSR…SSTV), 43–84 (DINS…DDED), and 112–139 (LTPF…TTVV). A compositionally biased stretch (polar residues) spans 66 to 77 (SDYNSYTHNQYY). The segment covering 125-139 (SIISSKSSNKSTTVV) has biased composition (low complexity). Residues 155–273 (SFLIVDDNII…LDFMANSIDD (119 aa)) form the Response regulatory domain. Residue Asp-206 is modified to 4-aspartylphosphate.

Functionally, required for stress adaptation, morphogenesis and virulence. This is Stress response regulator protein 1 (SRR1) from Candida albicans (strain SC5314 / ATCC MYA-2876) (Yeast).